A 434-amino-acid polypeptide reads, in one-letter code: uncharacterized protein (434 aa).

The next 11 membrane-spanning stretches (helical) occupy residues 50 to 70 (GSIA…SFTL), 72 to 92 (TGLL…VLAI), 95 to 115 (LMAF…LLPV), 135 to 155 (SPVV…QFGW), 158 to 178 (SLIA…YFPH), 179 to 199 (LNPE…IAIT), 229 to 249 (LPYI…KIFA), 288 to 308 (GFVP…VAGF), 319 to 339 (PNPM…VLLL), 376 to 396 (IFAA…AIYF), and 412 to 432 (VVAV…GLFV).

It localises to the cell membrane. This is an uncharacterized protein from Escherichia coli (strain K12).